The following is a 199-amino-acid chain: Small ribosomal subunit protein uS4 (199 aa).

The S4 RNA-binding domain maps to 106–170; it reads RRLQTIVFRK…SPVANELHPI (65 aa). A disordered region spans residues 177–199; it reads PAQRSAEMKEGQGEASEEGETDE.

This sequence belongs to the universal ribosomal protein uS4 family. In terms of assembly, part of the 30S ribosomal subunit. Contacts protein S5. The interaction surface between S4 and S5 is involved in control of translational fidelity.

In terms of biological role, one of the primary rRNA binding proteins, it binds directly to 16S rRNA where it nucleates assembly of the body of the 30S subunit. With S5 and S12 plays an important role in translational accuracy. In Thermoplasma acidophilum (strain ATCC 25905 / DSM 1728 / JCM 9062 / NBRC 15155 / AMRC-C165), this protein is Small ribosomal subunit protein uS4.